The primary structure comprises 544 residues: Lysophosphatidylcholine acyltransferase 2 (544 aa).

The Cytoplasmic segment spans residues 1–58 (MNRCAEAAAVAATVPGSGVGDSGLRPPMVPRQASFFPPPVPNPFVQQTRISAARRLQM). The helical; Signal-anchor for type II membrane protein transmembrane segment at 59 to 79 (ILLGIILLPVRALLVGLVLLL) threads the bilayer. Topologically, residues 80–544 (AWPFAVISTV…EEGTSGKKVD (465 aa)) are lumenal. The HXXXXD motif motif lies at 146 to 151 (HSTFFD). The EGTC motif signature appears at 220 to 223 (EGTC). EF-hand domains follow at residues 391 to 426 (PVSD…LCNP) and 428 to 463 (NTED…SLGV). Ca(2+) is bound by residues Asp-404, Asn-406, Asp-408, Ser-410, Glu-415, Asp-441, Asp-443, Asp-445, Tyr-447, and Glu-452. Residues 520–530 (TAPSVASNKVS) show a composition bias toward polar residues. A disordered region spans residues 520 to 544 (TAPSVASNKVSPESHEEGTSGKKVD). The span at 531–544 (PESHEEGTSGKKVD) shows a compositional bias: basic and acidic residues.

It belongs to the 1-acyl-sn-glycerol-3-phosphate acyltransferase family.

It localises to the endoplasmic reticulum membrane. Its subcellular location is the golgi apparatus membrane. It is found in the cell membrane. The protein localises to the lipid droplet. It catalyses the reaction a 1-acyl-sn-glycero-3-phosphocholine + an acyl-CoA = a 1,2-diacyl-sn-glycero-3-phosphocholine + CoA. It carries out the reaction a 1-O-alkyl-sn-glycero-3-phosphocholine + acetyl-CoA = a 1-O-alkyl-2-acetyl-sn-glycero-3-phosphocholine + CoA. The catalysed reaction is a 1-acyl-sn-glycero-3-phosphate + an acyl-CoA = a 1,2-diacyl-sn-glycero-3-phosphate + CoA. The enzyme catalyses a 1-O-(1Z-alkenyl)-sn-glycero-3-phosphocholine + an acyl-CoA = a 1-O-(1Z-alkenyl)-2-acyl-sn-glycero-3-phosphocholine + CoA. It catalyses the reaction 1-hexadecanoyl-sn-glycero-3-phosphate + (9Z)-octadecenoyl-CoA = 1-hexadecanoyl-2-(9Z-octadecenoyl)-sn-glycero-3-phosphate + CoA. It carries out the reaction 1-(9Z-octadecenoyl)-sn-glycero-3-phosphate + (9Z)-octadecenoyl-CoA = 1,2-di-(9Z-octadecenoyl)-sn-glycero-3-phosphate + CoA. The catalysed reaction is 1-(9Z-octadecenoyl)-sn-glycero-3-phosphate + hexadecanoyl-CoA = 1-(9Z)-octadecenoyl-2-hexadecanoyl-sn-glycero-3-phosphate + CoA. The enzyme catalyses 1-heptadecanoyl-sn-glycero-3-phosphate + (9Z)-octadecenoyl-CoA = 1-heptadecanoyl-2-(9Z)-octadecenoyl-sn-glycero-3-phosphate + CoA. It catalyses the reaction 1-octadecanoyl-sn-glycero-3-phosphate + (9Z)-octadecenoyl-CoA = 1-octadecanoyl-2-(9Z-octadecenoyl)-sn-glycero-3-phosphate + CoA. It carries out the reaction heptadecanoyl-CoA + 1-(9Z-octadecenoyl)-sn-glycero-3-phosphate = 1-(9Z)-octadecenoyl-2-heptadecanoyl-sn-glycero-3-phosphate + CoA. The catalysed reaction is 1-(9Z-octadecenoyl)-sn-glycero-3-phosphate + (9Z,12Z)-octadecadienoyl-CoA = 1-(9Z)-octadecenoyl-2-(9Z,12Z)-octadecadienoyl-sn-glycero-3-phosphate + CoA. The enzyme catalyses 1-(9Z-octadecenoyl)-sn-glycero-3-phosphate + tetradecanoyl-CoA = 1-(9Z)-octadecenoyl-2-tetradecanoyl-sn-glycero-3-phosphate + CoA. It catalyses the reaction pentadecanoyl-CoA + 1-(9Z-octadecenoyl)-sn-glycero-3-phosphate = 1-(9Z)-octadecenoyl-2-pentadecanoyl-sn-glycero-3-phosphate + CoA. It carries out the reaction nonadecanoyl-CoA + 1-(9Z-octadecenoyl)-sn-glycero-3-phosphate = 1-(9Z)-octadecenoyl-2-nonadecanoyl-sn-glycero-3-phosphate + CoA. The catalysed reaction is 1-hexadecanoyl-sn-glycero-3-phosphocholine + (9Z)-octadecenoyl-CoA = 1-hexadecanoyl-2-(9Z-octadecenoyl)-sn-glycero-3-phosphocholine + CoA. The enzyme catalyses 1-O-hexadecyl-sn-glycero-3-phosphocholine + acetyl-CoA = 1-O-hexadecyl-2-acetyl-sn-glycero-3-phosphocholine + CoA. It catalyses the reaction 1-O-octadecyl-sn-glycero-3-phosphocholine + acetyl-CoA = 1-O-octadecyl-2-acetyl-sn-glycero-3-phosphocholine + CoA. It carries out the reaction 1-hexadecanoyl-sn-glycero-3-phosphocholine + acetyl-CoA = 1-hexadecanoyl-2-acetyl-sn-glycero-3-phosphocholine + CoA. The catalysed reaction is 1-octadecanoyl-sn-glycero-3-phosphocholine + acetyl-CoA = 1-octadecanoyl-2-acetyl-sn-glycero-3-phosphocholine + CoA. The enzyme catalyses a 1-O-(1Z-alkenyl)-sn-glycero-3-phosphocholine + acetyl-CoA = 1-O-(1Z)-alkenyl-2-acetyl-sn-glycero-3-phosphocholine + CoA. It catalyses the reaction 1-O-octadecyl-sn-glycero-3-phosphocholine + (5Z,8Z,11Z,14Z)-eicosatetraenoyl-CoA = 1-O-octadecyl-2-(5Z,8Z,11Z,14Z)-eicosatetraenoyl-sn-glycero-3-phosphocholine + CoA. It participates in lipid metabolism; phospholipid metabolism. In terms of biological role, exhibits both acyltransferase and acetyltransferase activities. Activity is calcium-dependent. Catalyzes the conversion of lysophosphatidylcholine (1-acyl-sn-glycero-3-phosphocholine or LPC) into phosphatidylcholine (1,2-diacyl-sn-glycero-3-phosphocholine or PC). Catalyzes the conversion 1-acyl-sn-glycerol-3-phosphate (lysophosphatidic acid or LPA) into 1,2-diacyl-sn-glycerol-3-phosphate (phosphatidic acid or PA) by incorporating an acyl moiety at the sn-2 position of the glycerol backbone. Involved in platelet-activating factor (PAF) biosynthesis by catalyzing the conversion of the PAF precursor, 1-O-alkyl-sn-glycero-3-phosphocholine (lyso-PAF) into 1-O-alkyl-2-acetyl-sn-glycero-3-phosphocholine (PAF). Also converts lyso-PAF to 1-O-alkyl-2-acyl-sn-glycero-3-phosphocholine (PC), a major component of cell membranes and a PAF precursor. Under resting conditions, acyltransferase activity is preferred. Upon acute inflammatory stimulus, acetyltransferase activity is enhanced and PAF synthesis increases. Involved in the regulation of lipid droplet number and size. This chain is Lysophosphatidylcholine acyltransferase 2 (Lpcat2), found in Rattus norvegicus (Rat).